Consider the following 227-residue polypeptide: Translation initiation factor 6 (227 aa).

It belongs to the eIF-6 family.

Binds to the 50S ribosomal subunit and prevents its association with the 30S ribosomal subunit to form the 70S initiation complex. This is Translation initiation factor 6 from Methanococcus maripaludis (strain DSM 14266 / JCM 13030 / NBRC 101832 / S2 / LL).